We begin with the raw amino-acid sequence, 164 residues long: CASP-like protein 1C2 (164 aa).

Topologically, residues 1 to 8 (MVKLTQRL) are cytoplasmic. A helical transmembrane segment spans residues 9–29 (GGLVLRFAAFCAALGAVIAMI). Residues 30–51 (TSRERSSFFVISLVAKYSDLAA) are Extracellular-facing. The helical transmembrane segment at 52–72 (FKYFVIANAIVTVYSFLVLFL) threads the bilayer. The Cytoplasmic segment spans residues 73 to 80 (PKESLLWK). A helical membrane pass occupies residues 81–101 (FVVVLDLMVTMLLTSSLSAAV). Residues 102–129 (AVAQVGKRGNANAGWLPICGQVPRFCDQ) lie on the Extracellular side of the membrane. Residues 130-150 (ITGALIAGLVALVLYVFLLIF) traverse the membrane as a helical segment. The Cytoplasmic portion of the chain corresponds to 151 to 164 (SIHHVVDPFLLRKS).

The protein belongs to the Casparian strip membrane proteins (CASP) family. In terms of assembly, homodimer and heterodimers.

The protein resides in the cell membrane. This is CASP-like protein 1C2 from Arabidopsis thaliana (Mouse-ear cress).